The chain runs to 243 residues: Tubulin-folding cofactor B (243 aa).

In terms of domain architecture, CAP-Gly spans 181–223; sequence RAESLGPGYWVGIQYDEPLGKHDGMVKGTRFFECPRLQGGMVR.

The protein belongs to the TBCB family. As to quaternary structure, supercomplex made of cofactors A to E. Cofactors A and D function by capturing and stabilizing tubulin in a quasi-native conformation. Cofactor E binds to the cofactor D-tubulin complex; interaction with cofactor C then causes the release of tubulin polypeptides that are committed to the native state. Interacts with TUBA6. In terms of tissue distribution, expressed in roots, stems, leaves, flowers and siliques.

The protein resides in the cytoplasm. Its function is as follows. Involved in control of cell division. Regulates probably the availability of alpha-tubulin for dimerization of alpha-/beta-tubulin, which is required for proper microtubule biogenesis. Decreased expression of TFCB results in enlarged mesophyll cells and leaf epidermal cells with bulged nuclei, increased ploidy and increased numbers of spindles and phragmoplasts. This chain is Tubulin-folding cofactor B (TFCB), found in Arabidopsis thaliana (Mouse-ear cress).